Consider the following 332-residue polypeptide: Putative integrase/recombinase y4rC (332 aa).

A Core-binding (CB) domain is found at 5–98 (ASLAPLLESF…AIHSFFRYAA (94 aa)). Positions 122–307 (TLVNFLTRPE…TLAMKEAALA (186 aa)) constitute a Tyr recombinase domain. Active-site residues include Arg-162, Lys-187, His-259, Arg-262, and His-285. Tyr-294 acts as the O-(3'-phospho-DNA)-tyrosine intermediate in catalysis.

The protein belongs to the 'phage' integrase family.

This is Putative integrase/recombinase y4rC from Sinorhizobium fredii (strain NBRC 101917 / NGR234).